The sequence spans 153 residues: NADH dehydrogenase [ubiquinone] 1 beta subcomplex subunit 11, mitochondrial (153 aa).

A mitochondrion-targeting transit peptide spans 1–29; it reads MAAGLFGLSARLLLAAAATRGLPAARVRW. The disordered stretch occupies residues 40-77; that stretch reads PSAVAGKRPPEPTTQWQEDPEPEDENLYEKNPDSHGYD. Basic and acidic residues predominate over residues 66–77; that stretch reads LYEKNPDSHGYD. The helical transmembrane segment at 89–109 threads the bilayer; it reads LVFFFGVSIILVLGSTFVAYL.

Belongs to the complex I NDUFB11 subunit family. Complex I is composed of 45 different subunits. Interacts with BCAP31.

It localises to the mitochondrion inner membrane. Its function is as follows. Accessory subunit of the mitochondrial membrane respiratory chain NADH dehydrogenase (Complex I), that is believed not to be involved in catalysis. Complex I functions in the transfer of electrons from NADH to the respiratory chain. The immediate electron acceptor for the enzyme is believed to be ubiquinone. The polypeptide is NADH dehydrogenase [ubiquinone] 1 beta subcomplex subunit 11, mitochondrial (NDUFB11) (Pan troglodytes (Chimpanzee)).